The primary structure comprises 69 residues: DNA gyrase inhibitor YacG (69 aa).

Zn(2+) contacts are provided by cysteine 7, cysteine 10, cysteine 26, and cysteine 30.

Belongs to the DNA gyrase inhibitor YacG family. Interacts with GyrB. Zn(2+) serves as cofactor.

Functionally, inhibits all the catalytic activities of DNA gyrase by preventing its interaction with DNA. Acts by binding directly to the C-terminal domain of GyrB, which probably disrupts DNA binding by the gyrase. This chain is DNA gyrase inhibitor YacG, found in Shewanella baltica (strain OS223).